Reading from the N-terminus, the 294-residue chain is 4-hydroxy-tetrahydrodipicolinate synthase (294 aa).

Residue Thr47 participates in pyruvate binding. Tyr135 functions as the Proton donor/acceptor in the catalytic mechanism. Lys163 serves as the catalytic Schiff-base intermediate with substrate. A pyruvate-binding site is contributed by Ile205.

It belongs to the DapA family. Homotetramer; dimer of dimers.

It localises to the cytoplasm. It carries out the reaction L-aspartate 4-semialdehyde + pyruvate = (2S,4S)-4-hydroxy-2,3,4,5-tetrahydrodipicolinate + H2O + H(+). Its pathway is amino-acid biosynthesis; L-lysine biosynthesis via DAP pathway; (S)-tetrahydrodipicolinate from L-aspartate: step 3/4. Functionally, catalyzes the condensation of (S)-aspartate-beta-semialdehyde [(S)-ASA] and pyruvate to 4-hydroxy-tetrahydrodipicolinate (HTPA). In Rickettsia prowazekii (strain Madrid E), this protein is 4-hydroxy-tetrahydrodipicolinate synthase.